A 572-amino-acid polypeptide reads, in one-letter code: Squalene monooxygenase (572 aa).

Residues Met-1 to Asp-19 are Cytoplasmic-facing. The segment at Met-1–Lys-98 is interaction with MARCHF6. Residues Val-20–Val-40 lie within the membrane without spanning it. The Cytoplasmic portion of the chain corresponds to Leu-41–His-572. The segment at Gln-61–Leu-72 is required for degradation in response to high membrane cholesterol levels. The segment at Thr-116–His-572 is sufficient for enzyme activity. Residues Val-131–Leu-132, Glu-151–Arg-152, Arg-159, Arg-232, Val-248, Asp-406, and Met-419 contribute to the FAD site. Positions Pro-514–His-572 are hydrophobic; mediates interaction with membranes.

Belongs to the squalene monooxygenase family. In terms of assembly, interacts (via N-terminal domain) with MARCHF6. Interacts with SMIM22; this interaction modulates lipid droplet formation. FAD is required as a cofactor. Post-translationally, ubiquitinated by MARCHF6 in response to high cholesterol levels in intracellular membranes, leading to proteasomal degradation. Detected in liver.

It localises to the microsome membrane. The protein resides in the endoplasmic reticulum membrane. It carries out the reaction squalene + reduced [NADPH--hemoprotein reductase] + O2 = (S)-2,3-epoxysqualene + oxidized [NADPH--hemoprotein reductase] + H2O + H(+). It functions in the pathway terpene metabolism; lanosterol biosynthesis; lanosterol from farnesyl diphosphate: step 2/3. Its function is as follows. Catalyzes the stereospecific oxidation of squalene to (S)-2,3-epoxysqualene, and is considered to be a rate-limiting enzyme in steroid biosynthesis. This is Squalene monooxygenase (Sqle) from Mus musculus (Mouse).